The sequence spans 620 residues: 1-deoxy-D-xylulose-5-phosphate synthase (620 aa).

Residues histidine 80 and 121 to 123 (GHS) contribute to the thiamine diphosphate site. Aspartate 152 contributes to the Mg(2+) binding site. Residues 153 to 154 (GA), asparagine 181, tyrosine 288, and glutamate 370 contribute to the thiamine diphosphate site. Mg(2+) is bound at residue asparagine 181.

The protein belongs to the transketolase family. DXPS subfamily. As to quaternary structure, homodimer. Mg(2+) serves as cofactor. It depends on thiamine diphosphate as a cofactor.

It carries out the reaction D-glyceraldehyde 3-phosphate + pyruvate + H(+) = 1-deoxy-D-xylulose 5-phosphate + CO2. It functions in the pathway metabolic intermediate biosynthesis; 1-deoxy-D-xylulose 5-phosphate biosynthesis; 1-deoxy-D-xylulose 5-phosphate from D-glyceraldehyde 3-phosphate and pyruvate: step 1/1. In terms of biological role, catalyzes the acyloin condensation reaction between C atoms 2 and 3 of pyruvate and glyceraldehyde 3-phosphate to yield 1-deoxy-D-xylulose-5-phosphate (DXP). The polypeptide is 1-deoxy-D-xylulose-5-phosphate synthase (Cronobacter sakazakii (strain ATCC BAA-894) (Enterobacter sakazakii)).